We begin with the raw amino-acid sequence, 427 residues long: Glucose-6-phosphate isomerase (427 aa).

The Proton donor role is filled by Glu-277. Active-site residues include His-298 and Lys-414.

Belongs to the GPI family.

It is found in the cytoplasm. The catalysed reaction is alpha-D-glucose 6-phosphate = beta-D-fructose 6-phosphate. The protein operates within carbohydrate biosynthesis; gluconeogenesis. Its pathway is carbohydrate degradation; glycolysis; D-glyceraldehyde 3-phosphate and glycerone phosphate from D-glucose: step 2/4. Its function is as follows. Catalyzes the reversible isomerization of glucose-6-phosphate to fructose-6-phosphate. The protein is Glucose-6-phosphate isomerase of Mycoplasma capricolum subsp. capricolum (strain California kid / ATCC 27343 / NCTC 10154).